We begin with the raw amino-acid sequence, 421 residues long: Anhydromevalonate phosphate decarboxylase (421 aa).

Positions 131 and 194 each coordinate Mn(2+). Asp-240 serves as the catalytic Proton acceptor.

The protein belongs to the UbiD family. The cofactor is prenylated FMN. Mn(2+) serves as cofactor.

It carries out the reaction (2E)-3-methyl-5-phosphooxypent-2-enoate + H(+) = isopentenyl phosphate + CO2. Its pathway is isoprenoid biosynthesis; isopentenyl diphosphate biosynthesis via mevalonate pathway. Catalyzes the conversion of trans-anhydromevalonate 5-phosphate (tAHMP) into isopentenyl phosphate. Involved in the archaeal mevalonate (MVA) pathway, which provides fundamental precursors for isoprenoid biosynthesis, such as isopentenyl diphosphate (IPP) and dimethylallyl diphosphate (DMAPP). The sequence is that of Anhydromevalonate phosphate decarboxylase from Methanocaldococcus jannaschii (strain ATCC 43067 / DSM 2661 / JAL-1 / JCM 10045 / NBRC 100440) (Methanococcus jannaschii).